Here is a 243-residue protein sequence, read N- to C-terminus: UTP--glucose-1-phosphate uridylyltransferase AglF (243 aa).

Belongs to the UDPGP type 2 family.

It catalyses the reaction alpha-D-glucose 1-phosphate + UTP + H(+) = UDP-alpha-D-glucose + diphosphate. It functions in the pathway cell surface structure biogenesis; S-layer biogenesis. In terms of biological role, involved in the assembly of a N-linked pentasaccharide that decorates the S-layer glycoprotein and flagellins. Involved in the biosynthesis of the hexuronic acid found at position 3 of the pentasaccharide. The sequence is that of UTP--glucose-1-phosphate uridylyltransferase AglF (aglF) from Haloferax volcanii (strain ATCC 29605 / DSM 3757 / JCM 8879 / NBRC 14742 / NCIMB 2012 / VKM B-1768 / DS2) (Halobacterium volcanii).